Consider the following 160-residue polypeptide: Deoxyuridine 5'-triphosphate nucleotidohydrolase (160 aa).

Substrate contacts are provided by residues 79 to 81 (RSG), asparagine 92, 96 to 98 (TVD), and lysine 106.

This sequence belongs to the dUTPase family. Mg(2+) serves as cofactor.

The catalysed reaction is dUTP + H2O = dUMP + diphosphate + H(+). It functions in the pathway pyrimidine metabolism; dUMP biosynthesis; dUMP from dCTP (dUTP route): step 2/2. This enzyme is involved in nucleotide metabolism: it produces dUMP, the immediate precursor of thymidine nucleotides and it decreases the intracellular concentration of dUTP so that uracil cannot be incorporated into DNA. In Sinorhizobium medicae (strain WSM419) (Ensifer medicae), this protein is Deoxyuridine 5'-triphosphate nucleotidohydrolase.